We begin with the raw amino-acid sequence, 187 residues long: MSKSASRARLFEIIRRRSFGRGEVTLASGRKSDFYFNLKPTMLDPEGATLLAELTYEALKDDNLDFIGGLEMGAVPLAGALAQISWIKGHPIAAFFVRKKPKEHGAKLAIEGLPRGETLQGKRVVIVEDVTTTGGSAMKAVESVRETGAEVVLVLTMVDREEGATDTFGAAGLPFRSLYKASEFLKA.

5-phospho-alpha-D-ribose 1-diphosphate-binding positions include Arg98, Lys99, Lys102, His104, and 128 to 136 (EDVTTTGGS). Orotate is bound by residues Thr132 and Arg160.

This sequence belongs to the purine/pyrimidine phosphoribosyltransferase family. PyrE subfamily. In terms of assembly, homodimer. Mg(2+) is required as a cofactor.

The enzyme catalyses orotidine 5'-phosphate + diphosphate = orotate + 5-phospho-alpha-D-ribose 1-diphosphate. Its pathway is pyrimidine metabolism; UMP biosynthesis via de novo pathway; UMP from orotate: step 1/2. In terms of biological role, catalyzes the transfer of a ribosyl phosphate group from 5-phosphoribose 1-diphosphate to orotate, leading to the formation of orotidine monophosphate (OMP). The protein is Orotate phosphoribosyltransferase of Bradyrhizobium diazoefficiens (strain JCM 10833 / BCRC 13528 / IAM 13628 / NBRC 14792 / USDA 110).